Here is a 463-residue protein sequence, read N- to C-terminus: Phosphomethylpyrimidine synthase (463 aa).

Substrate-binding positions include Asn-80, Met-109, Tyr-138, His-173, 193 to 195 (SRG), 234 to 237 (DGLR), and Glu-273. His-277 is a binding site for Zn(2+). Tyr-300 lines the substrate pocket. Residue His-341 coordinates Zn(2+). Positions 421, 424, and 429 each coordinate [4Fe-4S] cluster.

Belongs to the ThiC family. In terms of assembly, homodimer. [4Fe-4S] cluster serves as cofactor.

The catalysed reaction is 5-amino-1-(5-phospho-beta-D-ribosyl)imidazole + S-adenosyl-L-methionine = 4-amino-2-methyl-5-(phosphooxymethyl)pyrimidine + CO + 5'-deoxyadenosine + formate + L-methionine + 3 H(+). It functions in the pathway cofactor biosynthesis; thiamine diphosphate biosynthesis. In terms of biological role, catalyzes the synthesis of the hydroxymethylpyrimidine phosphate (HMP-P) moiety of thiamine from aminoimidazole ribotide (AIR) in a radical S-adenosyl-L-methionine (SAM)-dependent reaction. The chain is Phosphomethylpyrimidine synthase from Anaeromyxobacter dehalogenans (strain 2CP-1 / ATCC BAA-258).